Consider the following 165-residue polypeptide: Lipoprotein signal peptidase (165 aa).

Transmembrane regions (helical) follow at residues 10–30 (LKWL…KYWV), 42–62 (VLPG…GLFT), 71–91 (LFVW…YKLI), 105–125 (IGGA…VDFI), and 133–153 (HWPT…IVTI). Catalysis depends on residues Asp-123 and Asp-141.

This sequence belongs to the peptidase A8 family.

Its subcellular location is the cell inner membrane. The enzyme catalyses Release of signal peptides from bacterial membrane prolipoproteins. Hydrolyzes -Xaa-Yaa-Zaa-|-(S,diacylglyceryl)Cys-, in which Xaa is hydrophobic (preferably Leu), and Yaa (Ala or Ser) and Zaa (Gly or Ala) have small, neutral side chains.. It participates in protein modification; lipoprotein biosynthesis (signal peptide cleavage). This protein specifically catalyzes the removal of signal peptides from prolipoproteins. The chain is Lipoprotein signal peptidase from Blochmanniella pennsylvanica (strain BPEN).